The primary structure comprises 31 residues: Photosystem II reaction center protein T (31 aa).

Residues 3–23 (ALVYTFLLIGTLGIIFFAIFF) traverse the membrane as a helical segment.

It belongs to the PsbT family. In terms of assembly, PSII is composed of 1 copy each of membrane proteins PsbA, PsbB, PsbC, PsbD, PsbE, PsbF, PsbH, PsbI, PsbJ, PsbK, PsbL, PsbM, PsbT, PsbY, PsbZ, Psb30/Ycf12, at least 3 peripheral proteins of the oxygen-evolving complex and a large number of cofactors. It forms dimeric complexes.

The protein localises to the plastid. It is found in the chloroplast thylakoid membrane. Found at the monomer-monomer interface of the photosystem II (PS II) dimer, plays a role in assembly and dimerization of PSII. PSII is a light-driven water plastoquinone oxidoreductase, using light energy to abstract electrons from H(2)O, generating a proton gradient subsequently used for ATP formation. This Stigeoclonium helveticum (Green alga) protein is Photosystem II reaction center protein T.